Here is a 189-residue protein sequence, read N- to C-terminus: Ras-like protein 1 (189 aa).

10–17 (GAGGVGKS) is a GTP binding site. The Effector region signature appears at 32-40 (YDPTIEDSY). GTP is bound by residues 57 to 61 (DTAGQ) and 116 to 119 (NKCD). Position 186 is a cysteine methyl ester (Cys186). Cys186 carries S-geranylgeranyl cysteine lipidation. Residues 187-189 (KIL) constitute a propeptide, removed in mature form.

This sequence belongs to the small GTPase superfamily. Ras family.

Its subcellular location is the cell membrane. It carries out the reaction GTP + H2O = GDP + phosphate + H(+). Alternates between an inactive form bound to GDP and an active form bound to GTP. Activated by a guanine nucleotide-exchange factor (GEF) and inactivated by a GTPase-activating protein (GAP). In terms of biological role, ras proteins bind GDP/GTP and possess intrinsic GTPase activity. Plays a role in eye development by regulating cell growth, survival of postmitotic ommatidial cells and differentiation of photoreceptor cells. During larval development, mediates Ptth/tor signaling leading to the production of ecdysone, a hormone required for the initiation of metamorphosis. This Drosophila persimilis (Fruit fly) protein is Ras-like protein 1.